The primary structure comprises 1313 residues: Ataxin-2 (1313 aa).

A compositionally biased stretch (low complexity) spans 1 to 12 (MRSAAAAPRSPA). Residues 1–255 (MRSAAAAPRS…RNSNKGLPQS (255 aa)) are disordered. Residues 48–65 (GPYPSAAPPPPGPGPPPS) show a composition bias toward pro residues. Composition is skewed to low complexity over residues 104–114 (FVVLLLPLASP), 141–154 (ARPAPGCPRPACEP), 166–187 (QQQQQQQQQQQQQQQQQQQQQQ), and 204–234 (LLASPAAAPSPSSSSVSSSSATAPSSVVAAT). A compositionally biased stretch (gly residues) spans 235-244 (SGGGRPGLGR). S248 is modified (phosphoserine). Positions 267-344 (RMVHILTSVV…FVVVQFKDMD (78 aa)) constitute a Sm domain. Residues S393, S466, S478, S508, and S554 each carry the phosphoserine modification. 2 stretches are compositionally biased toward basic and acidic residues: residues 459 to 471 (ALENDDRSEEEKY) and 478 to 492 (SSEREGHSINTRENK). Disordered stretches follow at residues 459 to 954 (ALEN…HQQP) and 1137 to 1219 (NATL…NSFP). Residues 508–544 (SGRQNSPRMGQPGSGSMPSRSTSHTSDFNPNSGSDQR) are compositionally biased toward polar residues. A compositionally biased stretch (pro residues) spans 552-562 (WPSPCPSPSSR). Residues 563–581 (PPSRYQSGPNSLPPRAATP) are compositionally biased toward low complexity. Pro residues predominate over residues 582-598 (TRPPSRPPSRPSRPPSH). The residue at position 624 (S624) is a Phosphoserine. Positions 627–637 (AQRHPRNHRVS) are enriched in basic residues. R640 is subject to Asymmetric dimethylarginine; alternate. An Omega-N-methylarginine; alternate modification is found at R640. The residue at position 642 (S642) is a Phosphoserine. Positions 666 to 681 (TSPSGGTWSSVVSGVP) are enriched in low complexity. A Phosphoserine modification is found at S684. Positions 693–703 (PRQNSIGNTPS) are enriched in polar residues. At S728 the chain carries Phosphoserine. T741 carries the phosphothreonine modification. Residues 768 to 777 (PNETSPSFSK) are compositionally biased toward polar residues. A phosphoserine mark is found at S772 and S784. Residues 788–804 (SEHRKQIDDLKKFKNDF) are compositionally biased toward basic and acidic residues. Positions 807-820 (QPSSTSESMDQLLN) are enriched in polar residues. Over residues 821–844 (KNREGEKSRDLIKDKIEPSAKDSF) the composition is skewed to basic and acidic residues. A compositionally biased stretch (low complexity) spans 847-871 (NSSSNCTSGSSKPNSPSISPSILSN). A phosphoserine mark is found at S856, S857, S861, S865, S867, S888, and S889. Positions 880-891 (VTSQGVQTSSPA) are enriched in polar residues. K893 participates in a covalent cross-link: Glycyl lysine isopeptide (Lys-Gly) (interchain with G-Cter in SUMO2). Residues 893–910 (KQEKDDKEEKKDAAEQVR) show a composition bias toward basic and acidic residues. Composition is skewed to low complexity over residues 925-936 (SFSQPKPSTTPT) and 1155-1192 (GQQQSQHGGSHPAPSPVQHHQHQAAQALHLASPQQQSA). The span at 1206–1219 (TPASNTQSPQNSFP) shows a compositional bias: polar residues.

Belongs to the ataxin-2 family. As to quaternary structure, monomer. Can also form homodimers. Interacts with TARDBP; the interaction is RNA-dependent. Interacts with RBFOX1. Interacts with polyribosomes. Interacts with SH3GL2 and SH3GL3. Interacts with SH3KBP1 and CBL. Interacts with EGFR. Interacts with ATXN2L. In terms of tissue distribution, expressed in the brain, heart, liver, skeletal muscle, pancreas and placenta. Isoform 1 is predominant in the brain and spinal cord. Isoform 4 is more abundant in the cerebellum. In the brain, broadly expressed in the amygdala, caudate nucleus, corpus callosum, hippocampus, hypothalamus, substantia nigra, subthalamic nucleus and thalamus.

The protein localises to the cytoplasm. Its function is as follows. Involved in EGFR trafficking, acting as negative regulator of endocytic EGFR internalization at the plasma membrane. In Homo sapiens (Human), this protein is Ataxin-2 (ATXN2).